The sequence spans 526 residues: pH-sensitive chloride channel 2 (526 aa).

Residues 1–18 form the signal peptide; it reads MDTLGIFVLISYLGLSSA. Over 19–300 the chain is Extracellular; that stretch reads AGVHLGDLQQ…VLLTREVGYY (282 aa). Asparagine 33, asparagine 42, asparagine 52, asparagine 192, asparagine 231, asparagine 264, asparagine 271, and asparagine 283 each carry an N-linked (GlcNAc...) asparagine glycan. The helical transmembrane segment at 301 to 321 threads the bilayer; it reads VIDYFLPSIMIVTISWVSFWL. At 322 to 327 the chain is on the cytoplasmic side; that stretch reads QADQTP. A helical transmembrane segment spans residues 328 to 347; the sequence is ARTTLGCTTLLSFITLSLSQ. Topologically, residues 348 to 360 are extracellular; that stretch reads ENNLMKVSYVTMS. A helical transmembrane segment spans residues 361-381; it reads EVWFLVCTIFIFGSLVEFAFV. Topologically, residues 382 to 505 are cytoplasmic; that stretch reads NTIWRRNNDL…VSLWIDRKMR (124 aa). Positions 463-488 are disordered; sequence ISLDEQDETSTSESSDSSKEKPAQTF. The chain crosses the membrane as a helical span at residues 506 to 526; sequence FVFPLSFIVFNALFWTLVYCL.

This sequence belongs to the ligand-gated ion channel (TC 1.A.9) family. In terms of tissue distribution, in third-instar larvae, expressed in the principal cells of the excretory Malpighian tubules (at protein level). Also detected in the enterocytes of the copper cell region and the iron cell region of the larval midgut (at protein level). In the copper cell region expression is confined to the interstitial cells and in the iron cell region it is expressed in the anterior portion (at protein level). Expressed in the Malpighian tubules and the middle midgut of third instar larvae and adults.

The protein resides in the apical cell membrane. It is found in the cell projection. Its subcellular location is the microvillus membrane. The protein localises to the late endosome membrane. It localises to the lysosome membrane. It carries out the reaction chloride(in) = chloride(out). Its function is as follows. Ligand and pH-gated channel that mediates chloride transport primarily in the mid-gut and thereby functions in larval metabolism and fluid homeostasis. Channel opening is triggered by zinc binding or, to a lesser extent, an increase in extracellular pH. Zinc-dependent activity in the mid-gut is required for modulating Tor-dependent metabolic programs that promote larval feeding and systematic growth. It may therefore act as an intestinal zinc sensor that mediates larval growth and metabolism in response to micronutrient availability. Activates Tor signaling via its activity in maintaining lysosome homeostasis in interstitial cells and/or by its role in activating the release of insulin-like peptides in the brain after feeding, via an unknown mechanism. Functions in lysosome homeostasis by regulating chloride transport into enterocyte lysosomes to sustain V-ATPase function which maintains lysosomal acidification and consequently promotes Tor activation at the lysosome membrane. Also appears to play a role in regulating fluid secretion and osmotic homeostasis in Malpighian tubules in response to the pH of extracellular urine. This function is important for proper urine production during diuresis. This chain is pH-sensitive chloride channel 2, found in Drosophila melanogaster (Fruit fly).